The following is a 141-amino-acid chain: Large ribosomal subunit protein uL11 (141 aa).

Belongs to the universal ribosomal protein uL11 family. Part of the ribosomal stalk of the 50S ribosomal subunit. Interacts with L10 and the large rRNA to form the base of the stalk. L10 forms an elongated spine to which L12 dimers bind in a sequential fashion forming a multimeric L10(L12)X complex. In terms of processing, one or more lysine residues are methylated.

In terms of biological role, forms part of the ribosomal stalk which helps the ribosome interact with GTP-bound translation factors. The protein is Large ribosomal subunit protein uL11 of Chloroflexus aggregans (strain MD-66 / DSM 9485).